A 698-amino-acid chain; its full sequence is UvrABC system protein B (698 aa).

In terms of domain architecture, Helicase ATP-binding spans 28 to 414 (RRILAGERDV…SGGEFVEQVI (387 aa)). 41–48 (GATGTGKS) contributes to the ATP binding site. Residues 94–117 (YYDYYQPEAYIAQTDTYIEKDSSI) carry the Beta-hairpin motif. The Helicase C-terminal domain maps to 432-598 (QIDDLIGEIR…PLRKKIADIL (167 aa)). The interval 609–629 (DTVQVGGSGRNVSRGRRAQSE) is disordered. The 36-residue stretch at 653–688 (ADLIKDLTAQMMAAASDLQFELAARFRDEIADLKKE) folds into the UVR domain.

Belongs to the UvrB family. Forms a heterotetramer with UvrA during the search for lesions. Interacts with UvrC in an incision complex.

The protein localises to the cytoplasm. In terms of biological role, the UvrABC repair system catalyzes the recognition and processing of DNA lesions. A damage recognition complex composed of 2 UvrA and 2 UvrB subunits scans DNA for abnormalities. Upon binding of the UvrA(2)B(2) complex to a putative damaged site, the DNA wraps around one UvrB monomer. DNA wrap is dependent on ATP binding by UvrB and probably causes local melting of the DNA helix, facilitating insertion of UvrB beta-hairpin between the DNA strands. Then UvrB probes one DNA strand for the presence of a lesion. If a lesion is found the UvrA subunits dissociate and the UvrB-DNA preincision complex is formed. This complex is subsequently bound by UvrC and the second UvrB is released. If no lesion is found, the DNA wraps around the other UvrB subunit that will check the other stand for damage. The polypeptide is UvrABC system protein B (Mycobacterium leprae (strain TN)).